We begin with the raw amino-acid sequence, 144 residues long: UPF0102 protein Veis_0630 (144 aa).

The interval 11-31 (PPAAAPGPAPAPASAATASER) is disordered.

Belongs to the UPF0102 family.

The polypeptide is UPF0102 protein Veis_0630 (Verminephrobacter eiseniae (strain EF01-2)).